Consider the following 361-residue polypeptide: MGSMAPRTLLLLLAGALTLKDTQAGSHSMRYFYTSVSRPGLGEPRFIIVGYVDDTQFVRFDSDAASPRMEQRAPWMGQVEPEYWDQQTQIAKDTAQTFRVNLNTALRYYNQSAAGSHTFQTMFGCEVWADGRFFHGYRQYAYDGADYIALNEDLRSWTAADTAAQNTQRKWEAAGEAERHRAYLERECVEWLRRYLEMGKETLQRADPPKAHVTHHPASDREATLRCWALGFYPAEISLTWQRDGEDQTQDTELVETRPGGDGTFQKWAAVVVPSGEEQRYTCRVQHEGLPEPLTLTWEPPAQPTALIVGIVAGVLGVLLILGAVVAVVRRKKHSSDGKGGRYTPAAGGHRDQGSDDSLMP.

The N-terminal stretch at 1–24 (MGSMAPRTLLLLLAGALTLKDTQA) is a signal peptide. An alpha-1 region spans residues 25-114 (GSHSMRYFYT…ALRYYNQSAA (90 aa)). The Extracellular portion of the chain corresponds to 25–308 (GSHSMRYFYT…EPPAQPTALI (284 aa)). The N-linked (GlcNAc...) asparagine glycan is linked to N110. The interval 115-206 (GSHTFQTMFG…EMGKETLQRA (92 aa)) is alpha-2. 2 cysteine pairs are disulfide-bonded: C125–C188 and C227–C283. The interval 207–298 (DPPKAHVTHH…GLPEPLTLTW (92 aa)) is alpha-3. The Ig-like C1-type domain occupies 209–297 (PKAHVTHHPA…EGLPEPLTLT (89 aa)). The interval 299 to 308 (EPPAQPTALI) is connecting peptide. A helical membrane pass occupies residues 309–329 (VGIVAGVLGVLLILGAVVAVV). Over 330-361 (RRKKHSSDGKGGRYTPAAGGHRDQGSDDSLMP) the chain is Cytoplasmic. The segment at 335–361 (SSDGKGGRYTPAAGGHRDQGSDDSLMP) is disordered. A phosphoserine mark is found at S355 and S358.

It belongs to the MHC class I family. In terms of assembly, heterodimer of an alpha chain and a beta chain (beta-2-microglobulin).

Its subcellular location is the membrane. Its function is as follows. Involved in the presentation of foreign antigens to the immune system. The chain is RLA class I histocompatibility antigen, alpha chain 11/11 from Oryctolagus cuniculus (Rabbit).